The primary structure comprises 45 residues: Large ribosomal subunit protein bL34 (45 aa).

The protein belongs to the bacterial ribosomal protein bL34 family.

The chain is Large ribosomal subunit protein bL34 from Corynebacterium urealyticum (strain ATCC 43042 / DSM 7109).